Here is a 228-residue protein sequence, read N- to C-terminus: Upstream activation factor subunit UAF30 (228 aa).

A DEK-C domain is found at 1–56; that stretch reads MAELNDYSTMIDILLSDMDLETVTTKKVRMALKEVYAIDVESQGKAINKLIRKHLD. A compositionally biased stretch (basic and acidic residues) spans 89–111; it reads SKRSSGEEKNDSETKGTHVEKKK. Residues 89-118 are disordered; it reads SKRSSGEEKNDSETKGTHVEKKKGTVSKSP. Residues 119-195 form the SWIB/MDM2 domain; sequence ISTRKVTLSK…HKILASHMTE (77 aa). The segment at 209–228 is disordered; sequence VRRKEKPIVSDSEQSDTKGI. A phosphoserine mark is found at Ser218, Ser220, and Ser223.

As to quaternary structure, component of the UAF (upstream activation factor) complex which consists of UAF30, RRN5, RRN9, RRN10, and histones H3 and H4.

Its subcellular location is the nucleus. It localises to the nucleolus. Nonessential component of the UAF (upstream activation factor) complex which interacts with the upstream element of the RNA polymerase I promoter and forms a stable preinitiation complex. Together with SPT15/TBP UAF seems to stimulate basal transcription to a fully activated level. UAF30 seems to play a role in silencing transcription by RNA polymerase II. This chain is Upstream activation factor subunit UAF30 (UAF30), found in Saccharomyces cerevisiae (strain ATCC 204508 / S288c) (Baker's yeast).